Reading from the N-terminus, the 275-residue chain is MTRFAPGAPAWFDLGSPDVAASADFYTGLFGWTATVVSDPGAGGYTTFSSDGKLVAAVARHQIDTPYHRPYGPGNDQHGMPAIWTVYFATDDADALTKRVETAGGEVIMTPMDVLGLGRMAVFADPAGAAFAVWRKGVMEGAEVTGVPGSVGWVELVTDGIGAARDFYPATLGLAPADTGLKGVTDPVWHIGDTPVAGTQELGVTGAVRPHWAVLFAVHDCDATVRRAVELGGSVENEPADTPRGRRADLLDPHGAGFSVVELREGYPAAAGGAS.

2 consecutive VOC domains span residues 8-136 and 150-263; these read APAW…VWRK and SVGW…VVEL.

The protein operates within antibiotic biosynthesis; daunorubicin biosynthesis. Its pathway is antibiotic biosynthesis; carminomycin biosynthesis. Functionally, involved in the biosynthesis of the anthracyclines carminomycin and daunorubicin (daunomycin) which are aromatic polyketide antibiotics that exhibit high cytotoxicity and are widely applied in the chemotherapy of a variety of cancers. In vivo, it acts jointly with DoxA in the conversion of 13-deoxycarminomycin and 13-deoxydaunorubicin to yield carminomycin and daunorubicin, respectively. In vitro, it also acts jointly with DoxA in the C-14 hydroxylation of daunorubicin to form doxorubicin, although this strain is not a doxorubicin producer. The sequence is that of Anthracycline biosynthesis protein DnrV (dnrV) from Streptomyces peucetius.